We begin with the raw amino-acid sequence, 272 residues long: Type III pantothenate kinase (272 aa).

6–13 (NVNNTNTL) lines the ATP pocket. Substrate is bound at residue 113-116 (GADR). D115 functions as the Proton acceptor in the catalytic mechanism. D135 provides a ligand contact to K(+). T138 lines the ATP pocket. A substrate-binding site is contributed by T190.

Belongs to the type III pantothenate kinase family. Homodimer. NH4(+) is required as a cofactor. It depends on K(+) as a cofactor.

It localises to the cytoplasm. It carries out the reaction (R)-pantothenate + ATP = (R)-4'-phosphopantothenate + ADP + H(+). The protein operates within cofactor biosynthesis; coenzyme A biosynthesis; CoA from (R)-pantothenate: step 1/5. In terms of biological role, catalyzes the phosphorylation of pantothenate (Pan), the first step in CoA biosynthesis. This chain is Type III pantothenate kinase, found in Acidobacterium capsulatum (strain ATCC 51196 / DSM 11244 / BCRC 80197 / JCM 7670 / NBRC 15755 / NCIMB 13165 / 161).